Consider the following 256-residue polypeptide: UstYa family oxidase phomYc (256 aa).

The chain crosses the membrane as a helical span at residues 38-58 (LVLVLQFVLIISLLASLHILG). Residues N64 and N132 are each glycosylated (N-linked (GlcNAc...) asparagine). Residues 158–162 (HQLHC) carry the HXXHC 1 motif. The N-linked (GlcNAc...) asparagine glycan is linked to N179. The HXXHC 2 signature appears at 193-197 (HIDHC).

Belongs to the ustYa family.

Its subcellular location is the membrane. It functions in the pathway mycotoxin biosynthesis. UstYa family oxidase; part of the gene cluster that mediates the biosynthesis of the phomopsins, a group of hexapeptide mycotoxins which infects lupins and causes lupinosis disease in livestock. Within the pathway, phomYc catalyzes the desaturation of the Ile moiety into 2,3-dehydroisoleucine (dIle). The pathway starts with the processing of the precursor phomA by several endopeptidases including kexin proteases as well as the cluster-specific S41 family peptidase phomP1 and the oligopeptidase phomG to produce 10 identical copies of the hexapeptide Tyr-Val-Ile-Pro-Ile-Asp. After being excised from the precursor peptide, the core peptides are cyclized and modified post-translationally by enzymes encoded within the gene cluster. The timing and order of proteolysis of the phomA precursor and PTMs are still unknown. Two tyrosinase-like enzymes, phomQ1 and phomQ2, catalyze the chlorination and hydroxylation of Tyr, respectively. PhomYb, is proposed to be involved in the construction of the macrocyclic structure. The other 4 ustYa family proteins may be involved in PTMs that generate the unique structure of phomopsin A. PhomYa is required for the hydroxylation of C-beta of Tyr. PhomYc, phomYd, and phomYe are responsible for the biosynthesis of 2,3-dehydroisoleucine (dIle), 2,3-dehydroaspartic acid (dAsp), and 3,4-dehydroproline (dPro), respectively. While dIle formation by phomYc is indispensable for the installation of dAsp by phomYd, the order of the other PTMs have not been elucidated yet. Most of the biosynthetic enzymes likely have broad substrate specificity, and thus, there might be a metabolic grid from a precursor to phomopsin A. The enzyme(s) responsible for the biosynthesis of 3,4-dehydrovaline (dVal) have also not been identified yet. Finally, phomM acts as an S-adenosylmethionine-dependent alpha-N-methyltransferase that catalyzes two successive N-methylation reactions, converting N-desmethyl-phomopsin A to phomopsin A and phomopsin A further to an N,N-dimethylated congener called phomopsin E. The sequence is that of UstYa family oxidase phomYc from Diaporthe leptostromiformis (Lupinosis disease fungus).